Here is a 303-residue protein sequence, read N- to C-terminus: Porphobilinogen deaminase (303 aa).

At cysteine 235 the chain carries S-(dipyrrolylmethanemethyl)cysteine.

The protein belongs to the HMBS family. Monomer. It depends on dipyrromethane as a cofactor.

The enzyme catalyses 4 porphobilinogen + H2O = hydroxymethylbilane + 4 NH4(+). It participates in porphyrin-containing compound metabolism; protoporphyrin-IX biosynthesis; coproporphyrinogen-III from 5-aminolevulinate: step 2/4. Tetrapolymerization of the monopyrrole PBG into the hydroxymethylbilane pre-uroporphyrinogen in several discrete steps. The chain is Porphobilinogen deaminase from Campylobacter fetus subsp. fetus (strain 82-40).